Consider the following 166-residue polypeptide: PTS system glucose-specific EIIA component (166 aa).

Positions 34–138 constitute a PTS EIIA type-1 domain; that stretch reads DPVFAQKMMG…SVISPIIITN (105 aa). The Zn(2+) site is built by H71 and H86. H86 (tele-phosphohistidine intermediate; for EIIA activity) is an active-site residue. H86 is modified (phosphohistidine; by HPr).

In terms of assembly, heterodimer with glycerol kinase (glpk). The cofactor is Zn(2+).

Its subcellular location is the cytoplasm. Its function is as follows. The phosphoenolpyruvate-dependent sugar phosphotransferase system (sugar PTS), a major carbohydrate active transport system, catalyzes the phosphorylation of incoming sugar substrates concomitantly with their translocation across the cell membrane. The enzyme II complex composed of PtsG and Crr is involved in glucose transport. The sequence is that of PTS system glucose-specific EIIA component (crr) from Staphylococcus aureus (strain MRSA252).